Here is a 146-residue protein sequence, read N- to C-terminus: Hemoglobin subunit beta-1 (146 aa).

The 145-residue stretch at 2–146 (GLTAHDRQLI…IADALGKGYH (145 aa)) folds into the Globin domain. Positions 63 and 92 each coordinate heme b.

It belongs to the globin family. As to quaternary structure, heterotetramer of two alpha chains and two beta chains. In terms of tissue distribution, red blood cells.

Functionally, involved in oxygen transport from the lung to the various peripheral tissues. This is Hemoglobin subunit beta-1 (hbb1) from Xenopus borealis (Kenyan clawed frog).